The sequence spans 359 residues: Type-1 angiotensin II receptor (359 aa).

At 1-25 the chain is on the extracellular side; that stretch reads MILNSSTEDGIKRIQDDCPKAGRHN. N-linked (GlcNAc...) asparagine glycosylation is present at Asn-4. Angiotensin II-binding residues include Gln-15 and Asp-17. 2 disulfides stabilise this stretch: Cys-18-Cys-274 and Cys-101-Cys-180. The chain crosses the membrane as a helical span at residues 26 to 55; sequence YIFVMIPTLYSIIFVVGIFGNSLVVIVIYF. Residues 56 to 61 lie on the Cytoplasmic side of the membrane; sequence YMKLKT. The helical transmembrane segment at 62–89 threads the bilayer; the sequence is VASVFLLNLALADLCFLLTLPLWAVYTA. Over 90–98 the chain is Extracellular; sequence MEYRWPFGN. The chain crosses the membrane as a helical span at residues 99-125; it reads YLCKIASASVSFNLYASVFLLTCLSID. The Cytoplasmic segment spans residues 126 to 141; it reads RYLAIVHPMKSRLRRT. A helical membrane pass occupies residues 142–165; sequence MLVAKVTCIIIWLLAGLASLPAII. The Extracellular portion of the chain corresponds to 166–190; the sequence is HRNVFFIENTNITVCAFHYESQNST. Position 167 (Arg-167) interacts with angiotensin II. An N-linked (GlcNAc...) asparagine glycan is attached at Asn-176. Positions 182, 183, and 184 each coordinate angiotensin II. N-linked (GlcNAc...) asparagine glycosylation is present at Asn-188. A helical membrane pass occupies residues 191 to 216; the sequence is LPIGLGLTKNILGFLFPFLIILTSYT. Position 199 (Lys-199) interacts with angiotensin II. The Cytoplasmic portion of the chain corresponds to 217-239; that stretch reads LIWKALKKAYEIQKNKPRNDDIF. A helical transmembrane segment spans residues 240 to 268; the sequence is KIIMAIVLFFFFSWIPHQIFTFLDVLIQL. Residues 269–278 lie on the Extracellular side of the membrane; sequence GIIRDCRIAD. The helical transmembrane segment at 279–304 threads the bilayer; the sequence is IVDTAMPITICIAYFNNCLNPLFYGF. The Cytoplasmic segment spans residues 305-359; that stretch reads LGKKFKKYFLQLLKYIPPKAKSHSNLSTKMSTLSYRPSDNVSSSTKKPAPCFEVE. Polar residues predominate over residues 335–350; that stretch reads STLSYRPSDNVSSSTK. The tract at residues 335-359 is disordered; it reads STLSYRPSDNVSSSTKKPAPCFEVE. A lipid anchor (S-palmitoyl cysteine) is attached at Cys-355.

Belongs to the G-protein coupled receptor 1 family. Interacts with MAS1. Interacts with ARRB1. Interacts with FLNA (via filamin repeat 21); increases PKA-mediated phosphorylation of FLNA. C-terminal Ser or Thr residues may be phosphorylated.

It localises to the cell membrane. In terms of biological role, receptor for angiotensin II, a vasoconstricting peptide, which acts as a key regulator of blood pressure and sodium retention by the kidney. The activated receptor in turn couples to G-alpha proteins G(q) (GNAQ, GNA11, GNA14 or GNA15) and thus activates phospholipase C and increases the cytosolic Ca(2+) concentrations, which in turn triggers cellular responses such as stimulation of protein kinase C. This chain is Type-1 angiotensin II receptor (AGTR1), found in Pan troglodytes (Chimpanzee).